Reading from the N-terminus, the 702-residue chain is Ribosomal RNA large subunit methyltransferase K/L (702 aa).

Residues 43–154 (LIYQSLMWSR…KETASIALDL (112 aa)) form the THUMP domain.

This sequence belongs to the methyltransferase superfamily. RlmKL family.

The protein localises to the cytoplasm. The enzyme catalyses guanosine(2445) in 23S rRNA + S-adenosyl-L-methionine = N(2)-methylguanosine(2445) in 23S rRNA + S-adenosyl-L-homocysteine + H(+). The catalysed reaction is guanosine(2069) in 23S rRNA + S-adenosyl-L-methionine = N(2)-methylguanosine(2069) in 23S rRNA + S-adenosyl-L-homocysteine + H(+). Its function is as follows. Specifically methylates the guanine in position 2445 (m2G2445) and the guanine in position 2069 (m7G2069) of 23S rRNA. The sequence is that of Ribosomal RNA large subunit methyltransferase K/L from Salmonella arizonae (strain ATCC BAA-731 / CDC346-86 / RSK2980).